A 191-amino-acid chain; its full sequence is Signal peptidase complex catalytic subunit sec11 (191 aa).

At 1–14 (MLSFLSSNISNARQ) the chain is on the cytoplasmic side. The helical; Signal-anchor for type II membrane protein transmembrane segment at 15–33 (TLAQVLNFALVLSSAFMMW) threads the bilayer. Over 34-191 (KGLSVFTGSS…MGVMVMLQRE (158 aa)) the chain is Lumenal. Catalysis depends on charge relay system residues serine 53, histidine 92, and aspartate 133. The segment at 177 to 188 (VLLGIMGVMVML) is C-terminal short (CTS) helix.

It belongs to the peptidase S26B family. In terms of assembly, component of the signal peptidase complex (SPC) composed of a catalytic subunit SEC11 and three accessory subunits SPC1, SPC2 and SPC3. The complex induces a local thinning of the ER membrane which is used to measure the length of the signal peptide (SP) h-region of protein substrates. This ensures the selectivity of the complex towards h-regions shorter than 18-20 amino acids. SPC associates with the translocon complex.

The protein resides in the endoplasmic reticulum membrane. The catalysed reaction is Cleavage of hydrophobic, N-terminal signal or leader sequences from secreted and periplasmic proteins.. Catalytic component of the signal peptidase complex (SPC) which catalyzes the cleavage of N-terminal signal sequences from nascent proteins as they are translocated into the lumen of the endoplasmic reticulum. Specifically cleaves N-terminal signal peptides that contain a hydrophobic alpha-helix (h-region) shorter than 18-20 amino acids. This chain is Signal peptidase complex catalytic subunit sec11 (sec11), found in Aspergillus terreus (strain NIH 2624 / FGSC A1156).